Reading from the N-terminus, the 79-residue chain is Toxin 3FTx-Oxy5 (79 aa).

The first 23 residues, 1–23 (MKTLLLTLVVMTIVCLDLGYTLT), serve as a signal peptide directing secretion. Cystine bridges form between C24–C41, C34–C59, C63–C71, and C72–C77.

This sequence belongs to the three-finger toxin family. Short-chain subfamily. In terms of tissue distribution, expressed by the venom gland.

It localises to the secreted. The sequence is that of Toxin 3FTx-Oxy5 from Oxyuranus microlepidotus (Inland taipan).